A 164-amino-acid polypeptide reads, in one-letter code: MEMTNAQRLILSNQYKMMTMLDPANAERYRRLQTIIERGYGLQMRELDREFGELKEETCRTIIDIMEMYHALHVSWSNLQDQQSIDERRVTFLGFDAATEARYLGYVRFMVNVEGRYTHFDAGTHGFYAQTPMWEKYQRMLNVWHACPRQYHLSANEINQIINA.

It belongs to the UPF0304 family.

This is UPF0304 protein YfbU from Shigella flexneri serotype 5b (strain 8401).